We begin with the raw amino-acid sequence, 86 residues long: Small ribosomal subunit protein bS16 (86 aa).

This sequence belongs to the bacterial ribosomal protein bS16 family.

This chain is Small ribosomal subunit protein bS16, found in Borreliella afzelii (strain PKo) (Borrelia afzelii).